We begin with the raw amino-acid sequence, 258 residues long: MDGGSGGPYTSRTAEEVFRDFRGRRAGMIKALTTDVEKFYQLCDPEKENLCLYGYPNETWEVTLPAEEVPPEIPEPALGINFARDGMNEKDWLALVAVHSDSWLLAVAFYFAARFGFDKEARRRLFNMINNLPTIFEVVTGAAKKQTKEKAPNSTNKPNKPSSKMQPRPESHSKAPKPPAPPKDDDESGDEYADEEEEERDNTLCGSCGTNDGKDEFWICCDSCERWYHGKCVKITPARAEHIKHYKCPDCGNKRARA.

Residues 143-205 are disordered; sequence AKKQTKEKAP…EEEERDNTLC (63 aa). Polar residues predominate over residues 152 to 165; that stretch reads PNSTNKPNKPSSKM. A compositionally biased stretch (acidic residues) spans 184 to 200; that stretch reads DDDESGDEYADEEEEER. A PHD-type zinc finger spans residues 202–254; it reads NTLCGSCGTNDGKDEFWICCDSCERWYHGKCVKITPARAEHIKHYKCPDCGNK.

This sequence belongs to the Alfin family.

Its subcellular location is the nucleus. In terms of biological role, histone-binding component that specifically recognizes H3 tails trimethylated on 'Lys-4' (H3K4me3), which mark transcription start sites of virtually all active genes. The sequence is that of PHD finger protein ALFIN-LIKE 5 from Oryza sativa subsp. indica (Rice).